Consider the following 461-residue polypeptide: Probable outer membrane lipoprotein SilC (461 aa).

Residues 1–17 form the signal peptide; the sequence is MFKLKLLSISTIFILAG. A lipid anchor (N-palmitoyl cysteine) is attached at Cys-18. Residue Cys-18 is the site of S-diacylglycerol cysteine attachment.

The protein belongs to the outer membrane factor (OMF) (TC 1.B.17) family.

It localises to the cell outer membrane. Its function is as follows. Component of the sil cation-efflux system that confers resistance to silver. May be part of a three-component cation/proton antiporter. This chain is Probable outer membrane lipoprotein SilC (silC), found in Salmonella typhimurium.